Here is a 258-residue protein sequence, read N- to C-terminus: Aspartate/glutamate leucyltransferase (258 aa).

Belongs to the R-transferase family. Bpt subfamily.

It is found in the cytoplasm. It catalyses the reaction N-terminal L-glutamyl-[protein] + L-leucyl-tRNA(Leu) = N-terminal L-leucyl-L-glutamyl-[protein] + tRNA(Leu) + H(+). It carries out the reaction N-terminal L-aspartyl-[protein] + L-leucyl-tRNA(Leu) = N-terminal L-leucyl-L-aspartyl-[protein] + tRNA(Leu) + H(+). Its function is as follows. Functions in the N-end rule pathway of protein degradation where it conjugates Leu from its aminoacyl-tRNA to the N-termini of proteins containing an N-terminal aspartate or glutamate. This chain is Aspartate/glutamate leucyltransferase, found in Rhizobium etli (strain ATCC 51251 / DSM 11541 / JCM 21823 / NBRC 15573 / CFN 42).